The primary structure comprises 240 residues: Seed lectin (240 aa).

A glycan (N-linked (GlcNAc...) asparagine) is linked at Asn-111. Mn(2+) is bound by residues Glu-123 and Asp-125. Positions 125, 129, and 132 each coordinate Ca(2+). Residues Asp-132 and His-137 each contribute to the Mn(2+) site. Asn-183 carries an N-linked (GlcNAc...) asparagine glycan.

Belongs to the leguminous lectin family. Homotetramer. Post-translationally, partially N-glycosylated at Asn-111 and Asn-183 with the heptasaccharide [(beta-xylosyl-1,2)(alpha-mannosyl-1,6)(alpha-mannosyl-1,3)]beta-manosyl-1,4-GlcNAC-beta-1,4-GlcNAc-beta-1,4 [alpha-fucosyl-1,3]GlcNAc. A small proportion of alpha chains are proteolytically cleaved at 114-115 into gamma and beta chains. This is probably dependent on the deglycosylation of Asn-111. Seed.

In terms of biological role, lectin that binds galactose. This Vatairea macrocarpa protein is Seed lectin.